The chain runs to 356 residues: Chavicol O-methyltransferase (356 aa).

S-adenosyl-L-methionine-binding residues include glycine 202, aspartate 225, aspartate 245, methionine 246, and lysine 259. The active-site Proton acceptor is the histidine 263.

This sequence belongs to the class I-like SAM-binding methyltransferase superfamily. Cation-independent O-methyltransferase family. COMT subfamily. Homodimer. In terms of tissue distribution, specifically expressed in the peltate glandular trichomes on the surface of the young basil leaves.

It catalyses the reaction (E)-isoeugenol + S-adenosyl-L-methionine = (E)-isomethyleugenol + S-adenosyl-L-homocysteine + H(+). The protein operates within aromatic compound metabolism; phenylpropanoid biosynthesis. Phenylpropene O-methyltransferase that catalyzes the methylation of the para-4-hydroxyl of chavicol to methylchavicol. Can also convert eugenol to methyleugenol but with less affinity. The sequence is that of Chavicol O-methyltransferase (CVOMT1) from Ocimum basilicum (Sweet basil).